A 338-amino-acid polypeptide reads, in one-letter code: Adenylosuccinate synthetase (338 aa).

GTP-binding positions include 12 to 18 (GDEGKGK) and 42 to 44 (GHT). D13 acts as the Proton acceptor in catalysis. The Mg(2+) site is built by D13 and G42. IMP-binding positions include 13–16 (DEGK), 40–43 (NAGH), T127, R141, Q179, T194, and R256. The Proton donor role is filled by H43. A substrate-binding site is contributed by 252-258 (TVTGRRR). Residues R258, 284-286 (CLD), and 324-326 (STG) contribute to the GTP site.

Belongs to the adenylosuccinate synthetase family. Homodimer. Requires Mg(2+) as cofactor.

It localises to the cytoplasm. It carries out the reaction IMP + L-aspartate + GTP = N(6)-(1,2-dicarboxyethyl)-AMP + GDP + phosphate + 2 H(+). Its pathway is purine metabolism; AMP biosynthesis via de novo pathway; AMP from IMP: step 1/2. In terms of biological role, plays an important role in the de novo pathway of purine nucleotide biosynthesis. Catalyzes the first committed step in the biosynthesis of AMP from IMP. The polypeptide is Adenylosuccinate synthetase (Methanococcus vannielii (strain ATCC 35089 / DSM 1224 / JCM 13029 / OCM 148 / SB)).